A 204-amino-acid polypeptide reads, in one-letter code: Ribonuclease HII (204 aa).

The RNase H type-2 domain maps to 1 to 197 (MILGIDEAGR…KNRILNPKLL (197 aa)). A divalent metal cation-binding residues include Asp6, Glu7, and Asp103.

Belongs to the RNase HII family. The cofactor is Mn(2+). Requires Mg(2+) as cofactor.

The protein resides in the cytoplasm. The enzyme catalyses Endonucleolytic cleavage to 5'-phosphomonoester.. Its function is as follows. Endonuclease that specifically degrades the RNA of RNA-DNA hybrids. The protein is Ribonuclease HII of Helicobacter pylori (strain Shi470).